The sequence spans 934 residues: Serine/threonine-protein kinase KIPK1 (934 aa).

6 disordered regions span residues 20–40 (LPKH…KDLV), 70–113 (RLMS…RFVG), 189–227 (PLMP…FGLQ), 305–343 (SSSA…RPKQ), 395–438 (SIDD…SCNV), and 466–493 (EKET…DYSR). Polar residues-rich tracts occupy residues 82–94 (SASA…TSPS) and 212–227 (NPIS…FGLQ). Residues 395–421 (SIDDNPPSYTSSHNPKICTDSLSSVSN) show a composition bias toward polar residues. One can recognise a Protein kinase domain in the interval 538–879 (FNLLKKLGCG…SVEIKRHPFF (342 aa)). ATP is bound by residues 544–552 (LGCGDIGTV) and Lys-567. The active-site Proton acceptor is Asp-663. The interval 738–773 (SSNQQQGRKPKRGDHLSKTQQHLSRSLPQLVAEPTE) is disordered. Polar residues predominate over residues 755–764 (KTQQHLSRSL).

It belongs to the protein kinase superfamily. Ser/Thr protein kinase family. As to quaternary structure, interacts with KCBP. Interacts with PERK8, PERK9, PERK10 and PERK13. Autophosphorylated. As to expression, expressed in roots, cauline leaves, flowers and siliques.

It localises to the cytoplasm. Its subcellular location is the nucleus. It catalyses the reaction L-seryl-[protein] + ATP = O-phospho-L-seryl-[protein] + ADP + H(+). The catalysed reaction is L-threonyl-[protein] + ATP = O-phospho-L-threonyl-[protein] + ADP + H(+). Its function is as follows. Could be involved in the negative regulation of root growth. The sequence is that of Serine/threonine-protein kinase KIPK1 from Arabidopsis thaliana (Mouse-ear cress).